The chain runs to 152 residues: Transcriptional regulator MraZ (152 aa).

SpoVT-AbrB domains follow at residues 5 to 52 and 81 to 124; these read ATLV…PLPE and ASEC…DETT.

It belongs to the MraZ family. Forms oligomers.

It localises to the cytoplasm. The protein localises to the nucleoid. Negatively regulates its own expression and that of the subsequent genes in the proximal part of the division and cell wall (dcw) gene cluster. Acts by binding directly to DNA. May also regulate the expression of genes outside the dcw cluster. The chain is Transcriptional regulator MraZ from Salmonella gallinarum (strain 287/91 / NCTC 13346).